A 321-amino-acid chain; its full sequence is uncharacterized protein (321 aa).

The region spanning 1 to 58 is the HTH lysR-type domain; that stretch reads MTPAQLRAYSAVVRLGSVRAAAAELGLSDAGVSMHVAALRKELDDPLFTRTGAGLAFT. The H-T-H motif DNA-binding region spans 18–37; it reads VRAAAAELGLSDAGVSMHVA.

Belongs to the LysR transcriptional regulatory family.

This is an uncharacterized protein from Mycobacterium tuberculosis (strain CDC 1551 / Oshkosh).